A 148-amino-acid polypeptide reads, in one-letter code: 3-dehydroquinate dehydratase (148 aa).

The active-site Proton acceptor is tyrosine 23. Positions 74, 80, and 87 each coordinate substrate. Residue histidine 100 is the Proton donor of the active site. Substrate contacts are provided by residues 101–102 (IS) and arginine 111.

It belongs to the type-II 3-dehydroquinase family. In terms of assembly, homododecamer.

It carries out the reaction 3-dehydroquinate = 3-dehydroshikimate + H2O. It functions in the pathway metabolic intermediate biosynthesis; chorismate biosynthesis; chorismate from D-erythrose 4-phosphate and phosphoenolpyruvate: step 3/7. Its function is as follows. Catalyzes a trans-dehydration via an enolate intermediate. This chain is 3-dehydroquinate dehydratase, found in Caldanaerobacter subterraneus subsp. tengcongensis (strain DSM 15242 / JCM 11007 / NBRC 100824 / MB4) (Thermoanaerobacter tengcongensis).